We begin with the raw amino-acid sequence, 150 residues long: Large ribosomal subunit protein bL9 (150 aa).

It belongs to the bacterial ribosomal protein bL9 family.

Its function is as follows. Binds to the 23S rRNA. This is Large ribosomal subunit protein bL9 from Paracidovorax citrulli (strain AAC00-1) (Acidovorax citrulli).